Reading from the N-terminus, the 470-residue chain is Crh-like protein UTR2 (470 aa).

The N-terminal stretch at 1-23 is a signal peptide; that stretch reads MRFSTLHFAFLATLSSIFTVVAA. Residues Cys58 and Cys69 are joined by a disulfide bond. 3 N-linked (GlcNAc...) asparagine glycosylation sites follow: Asn65, Asn100, and Asn125. A GH16 domain is found at 95-282; it reads SDYLGNSTEA…WAGGLINWDS (188 aa). Glu168 serves as the catalytic Nucleophile. Catalysis depends on Glu172, which acts as the Proton donor. Chitin is bound at residue Glu172. N-linked (GlcNAc...) asparagine glycans are attached at residues Asn177, Asn194, Asn198, Asn202, Asn235, and Asn239. Residues Trp259 and Thr270 each contribute to the chitin site. 2 N-linked (GlcNAc...) asparagine glycosylation sites follow: Asn314 and Asn327. The disordered stretch occupies residues 347-446; that stretch reads SDDATGFDPQ…SSGSSSQGVA (100 aa). Composition is skewed to low complexity over residues 370-384 and 392-408; these read TTITSVSGSSTITSV and TANVPAQNTAAAAQATA. A compositionally biased stretch (polar residues) spans 409-418; that stretch reads KSSTGTNTYD. Low complexity predominate over residues 433 to 446; that stretch reads TDSGSSGSSSQGVA. The GPI-anchor amidated serine moiety is linked to residue Ser440. Positions 441–470 are cleaved as a propeptide — removed in mature form; that stretch reads SSQGVANSLNESVISGIFASICLGILSFFM. N-linked (GlcNAc...) asparagine glycosylation is present at Asn450.

It belongs to the glycosyl hydrolase 16 family. CRH1 subfamily. In terms of processing, the GPI-anchor is attached to the protein in the endoplasmic reticulum and serves to target the protein to the cell surface. There, the glucosamine-inositol phospholipid moiety is cleaved off and the GPI-modified mannoprotein is covalently attached via its lipidless GPI glycan remnant to the 1,6-beta-glucan of the outer cell wall layer.

Its subcellular location is the secreted. It is found in the cell wall. The protein resides in the membrane. It catalyses the reaction Random endo-hydrolysis of N-acetyl-beta-D-glucosaminide (1-&gt;4)-beta-linkages in chitin and chitodextrins.. In terms of biological role, dual chitinase/transglycosylase that plays a role in cell wall architecture. Chitinase and transglycosylase activities are coupled. Required for the polysaccharide cross-linking at the septa and the cell wall. More specifically, transfers chitin to 1,6-beta-glucan in the cell wall. Plays an important role in fungal pathogenesis via its functions in cell wall assembly and regeneration, filamentation, and adherence to host cells. Acts as a cell surface antigen in acute candidemia patients. This is Crh-like protein UTR2 from Candida albicans (strain SC5314 / ATCC MYA-2876) (Yeast).